The chain runs to 194 residues: Large ribosomal subunit protein uL24c (194 aa).

The N-terminal 50 residues, 1–50 (MVAMAMASLQSSMSSLSLSSNSFLGQPLSPITLSPFLQGKPTEKKCLIVM), are a transit peptide targeting the chloroplast.

It belongs to the universal ribosomal protein uL24 family. In terms of assembly, part of the 50S ribosomal subunit.

The protein resides in the plastid. It is found in the chloroplast. One of two assembly initiator proteins, it binds directly to the 5'-end of the 23S rRNA, where it nucleates assembly of the 50S subunit. The polypeptide is Large ribosomal subunit protein uL24c (RPL24) (Pisum sativum (Garden pea)).